The primary structure comprises 138 residues: Large ribosomal subunit protein mL54 (138 aa).

Residues 1 to 14 (MATKRLFGATRTWA) constitute a mitochondrion transit peptide.

It belongs to the mitochondrion-specific ribosomal protein mL54 family. As to quaternary structure, component of the mitochondrial large ribosomal subunit (mt-LSU). Mature mammalian 55S mitochondrial ribosomes consist of a small (28S) and a large (39S) subunit. The 28S small subunit contains a 12S ribosomal RNA (12S mt-rRNA) and 30 different proteins. The 39S large subunit contains a 16S rRNA (16S mt-rRNA), a copy of mitochondrial valine transfer RNA (mt-tRNA(Val)), which plays an integral structural role, and 52 different proteins.

The protein resides in the mitochondrion. This Homo sapiens (Human) protein is Large ribosomal subunit protein mL54 (MRPL54).